Reading from the N-terminus, the 407-residue chain is MSRYVFTSESVTEGHPDKICDQVSDAVLDALLAQDPASRVACETVVNTGLCIITGEVTTTARVDFNTLVRGVIADIGYSSAKAGGFDANSCAVLVALDQQSPDIAQGVDEADDHAGDPLDKVGAGDQGIMFGYACDETPELMPLPISLAHRLARRLAEVRHNGTLGYLLPDGKTQVSVVYEDDQPVAIDTILISTQHIAEIDGISDEKGLRERISADLWTHVVEPATADLSLKPSKDTTKYLVNPTGKFVVGGPQGDAGLTGRKIIVDTYGGYARHGGGAFSGKDPTKVDRSAAYAARFVAKALVAAGLARKAEVQLSYAIGVAKPVSILVESFGTSSHSNDELTELVNANFDLRPGAIIENFKLRNLPQQRGGNFYREVAAYGHFGRSDLNLPWEDVSVIAAKLKG.

Histidine 15 serves as a coordination point for ATP. Residue aspartate 17 coordinates Mg(2+). Glutamate 43 contacts K(+). L-methionine contacts are provided by glutamate 56 and glutamine 100. A flexible loop region spans residues 100–110 (QSPDIAQGVDE). Residues 171-173 (DGK), 248-249 (KF), aspartate 257, 263-264 (RK), alanine 280, and lysine 284 contribute to the ATP site. Aspartate 257 serves as a coordination point for L-methionine. An L-methionine-binding site is contributed by lysine 288.

This sequence belongs to the AdoMet synthase family. As to quaternary structure, homotetramer; dimer of dimers. It depends on Mg(2+) as a cofactor. The cofactor is K(+).

It is found in the cytoplasm. The enzyme catalyses L-methionine + ATP + H2O = S-adenosyl-L-methionine + phosphate + diphosphate. Its pathway is amino-acid biosynthesis; S-adenosyl-L-methionine biosynthesis; S-adenosyl-L-methionine from L-methionine: step 1/1. Functionally, catalyzes the formation of S-adenosylmethionine (AdoMet) from methionine and ATP. The overall synthetic reaction is composed of two sequential steps, AdoMet formation and the subsequent tripolyphosphate hydrolysis which occurs prior to release of AdoMet from the enzyme. This Synechococcus sp. (strain RCC307) protein is S-adenosylmethionine synthase.